A 259-amino-acid polypeptide reads, in one-letter code: GTP cyclohydrolase FolE2 (259 aa).

The protein belongs to the GTP cyclohydrolase IV family.

It carries out the reaction GTP + H2O = 7,8-dihydroneopterin 3'-triphosphate + formate + H(+). The protein operates within cofactor biosynthesis; 7,8-dihydroneopterin triphosphate biosynthesis; 7,8-dihydroneopterin triphosphate from GTP: step 1/1. Functionally, converts GTP to 7,8-dihydroneopterin triphosphate. This chain is GTP cyclohydrolase FolE2, found in Nitratidesulfovibrio vulgaris (strain DSM 19637 / Miyazaki F) (Desulfovibrio vulgaris).